The sequence spans 1555 residues: Protein TASOR (1555 aa).

Disordered regions lie at residues 1–74, 645–711, 744–773, 870–911, and 1390–1462; these read MEEN…DKRA, QKKK…RQET, QNSTEELPSQKLKNLSQAHDTEREGAGQDQ, ALPN…TTPS, and NQGD…PTLD. Residues 35–47 show a composition bias toward polar residues; it reads VQQTLKRTNSTES. Basic residues predominate over residues 61 to 71; it reads RRFQIPRKSRD. Residues 667–688 are compositionally biased toward basic and acidic residues; it reads DRQSEKAWKHRKCEENVHHDNE. 2 stretches are compositionally biased toward polar residues: residues 692-702 and 744-761; these read SAQSLISSLGG and QNSTEELPSQKLKNLSQA. A compositionally biased stretch (basic and acidic residues) spans 888–904; the sequence is PLHETERQRPRHDRDYC. The span at 1402–1417 shows a compositional bias: acidic residues; sequence SKEEEDMSLDSEDDTP. A compositionally biased stretch (polar residues) spans 1448–1458; that stretch reads ESPSTLNQGKT.

This sequence belongs to the TASOR family. Component of the HUSH complex.

It is found in the nucleus. It localises to the chromosome. Component of the HUSH complex, a multiprotein complex that mediates epigenetic repression. The HUSH complex is recruited to genomic loci rich in H3K9me3 and is probably required to maintain transcriptional silencing by promoting further deposition of H3K9me3. In Xenopus laevis (African clawed frog), this protein is Protein TASOR.